A 208-amino-acid polypeptide reads, in one-letter code: Small ribosomal subunit protein uS4 (208 aa).

In terms of domain architecture, S4 RNA-binding spans 95–157; the sequence is RRIDNVVYRA…DRLKKLVRSN (63 aa).

This sequence belongs to the universal ribosomal protein uS4 family. As to quaternary structure, part of the 30S ribosomal subunit. Contacts protein S5. The interaction surface between S4 and S5 is involved in control of translational fidelity.

Functionally, one of the primary rRNA binding proteins, it binds directly to 16S rRNA where it nucleates assembly of the body of the 30S subunit. Its function is as follows. With S5 and S12 plays an important role in translational accuracy. The sequence is that of Small ribosomal subunit protein uS4 from Borrelia turicatae (strain 91E135).